Here is a 152-residue protein sequence, read N- to C-terminus: Venom protein family 1 protein 2 (152 aa).

The first 21 residues, M1–G21, serve as a signal peptide directing secretion. Residues C70 and C150 are joined by a disulfide bond.

The protein belongs to the insect vpf1 family. In terms of tissue distribution, expressed by the venom gland (posterior main gland) (at protein level).

It localises to the secreted. This Platymeris rhadamanthus (Red spot assassin bug) protein is Venom protein family 1 protein 2.